Consider the following 434-residue polypeptide: Protein FAM83A (434 aa).

The tract at residues 1 to 298 is DUF1669; the sequence is MSRSRHLGKI…LYASSKPVMG (298 aa). Residues 76 to 97 are disordered; sequence REPPCPPDTLGGAEAGPKGLDS. Residues Ser-301, Ser-327, Ser-348, and Ser-357 each carry the phosphoserine modification. The tract at residues 308 to 399 is disordered; sequence VPPGAAPANG…HDGPPAAVYS (92 aa). 2 stretches are compositionally biased toward low complexity: residues 320 to 332 and 348 to 357; these read SSSSGSASDRTSS and SVSASSGPCS. Positions 358-369 are enriched in pro residues; the sequence is PAAPHPPPPPRF.

The protein belongs to the FAM83 family. In terms of assembly, directly interacts (via DUF1669) with casein kinase isoforms CSNK1A1, CSNK1A1L, CSNK1D and CSNK1E. Phosphorylated upon EGFR activation in a breast cancer cell line.

Its subcellular location is the cytoplasm. Its function is as follows. Involved in mitochondrial maintenance during adipogenesis. May be acting by playing a role in the maintenance of normal mitochondrial function. In Homo sapiens (Human), this protein is Protein FAM83A.